The sequence spans 116 residues: uncharacterized protein (116 aa).

The next 2 helical transmembrane spans lie at 40–60 (AIVK…IGIL) and 72–92 (FLGS…VVPI).

It localises to the membrane. This is an uncharacterized protein from Saccharomyces cerevisiae (strain ATCC 204508 / S288c) (Baker's yeast).